A 704-amino-acid polypeptide reads, in one-letter code: Ribosomal RNA large subunit methyltransferase K/L (704 aa).

The region spanning 43–154 (TMYQSLLWSR…KEKASLSLDL (112 aa)) is the THUMP domain.

Belongs to the methyltransferase superfamily. RlmKL family.

Its subcellular location is the cytoplasm. It carries out the reaction guanosine(2445) in 23S rRNA + S-adenosyl-L-methionine = N(2)-methylguanosine(2445) in 23S rRNA + S-adenosyl-L-homocysteine + H(+). The catalysed reaction is guanosine(2069) in 23S rRNA + S-adenosyl-L-methionine = N(2)-methylguanosine(2069) in 23S rRNA + S-adenosyl-L-homocysteine + H(+). Specifically methylates the guanine in position 2445 (m2G2445) and the guanine in position 2069 (m7G2069) of 23S rRNA. The polypeptide is Ribosomal RNA large subunit methyltransferase K/L (Proteus mirabilis (strain HI4320)).